A 910-amino-acid polypeptide reads, in one-letter code: NADH-quinone oxidoreductase subunit G (910 aa).

A 2Fe-2S ferredoxin-type domain is found at 1–83; sequence MAKIYVDGKA…GTIISINDDT (83 aa). [2Fe-2S] cluster is bound by residues Cys-34, Cys-45, Cys-48, and Cys-67. Positions 83-122 constitute a 4Fe-4S His(Cys)3-ligated-type domain; sequence TSKKFRSNIVELLLTNHPHDCPVCEEGGNCHLQDMTVMTT. [4Fe-4S] cluster contacts are provided by His-99, Cys-103, Cys-106, Cys-112, Cys-151, Cys-154, Cys-157, Cys-201, Cys-228, Cys-231, Cys-235, and Cys-263. Residues 221-277 enclose the 4Fe-4S Mo/W bis-MGD-type domain; that stretch reads MQYAPGICQNCSIGCNISIGERYGEIRRIENRYHESINHYLICDLGRFGYSHTNLKN.

Belongs to the complex I 75 kDa subunit family. Composed of 13 different subunits. Subunits NuoCD, E, F, and G constitute the peripheral sector of the complex. It depends on [2Fe-2S] cluster as a cofactor. The cofactor is [4Fe-4S] cluster.

The catalysed reaction is a quinone + NADH + 5 H(+)(in) = a quinol + NAD(+) + 4 H(+)(out). NDH-1 shuttles electrons from NADH, via FMN and iron-sulfur (Fe-S) centers, to quinones in the respiratory chain. Couples the redox reaction to proton translocation (for every two electrons transferred, four hydrogen ions are translocated across the cytoplasmic membrane), and thus conserves the redox energy in a proton gradient. The chain is NADH-quinone oxidoreductase subunit G (nuoG) from Buchnera aphidicola subsp. Schizaphis graminum (strain Sg).